Consider the following 63-residue polypeptide: Large ribosomal subunit protein bL32 (63 aa).

It belongs to the bacterial ribosomal protein bL32 family.

This chain is Large ribosomal subunit protein bL32 (rpmF), found in Aquifex aeolicus (strain VF5).